The primary structure comprises 635 residues: MAPPLLLLLLASGAAACPLPCVCQNLSESLSTLCAHRGLLFVPPNVDRRTVELRLADNFIQALGPPDFRNMTGLVDLTLSRNAITRIGARAFGDLESLRSLHLDGNRLVELGTGSLRGPVNLQHLILSGNQLGRIAPGAFDDFLESLEDLDLSYNNLRQVPWAGIGAMPALHTLNLDHNLIDALPPGAFAQLGQLSRLDLTSNRLATLAPDPLFSRGRDAEASPAPLVLSFSGNPLHCNCELLWLRRLARPDDLETCASPPGLAGRYFWAVPEGEFSCEPPLIARHTQRLWVLEGQRATLRCRALGDPAPTMHWVGPDDRLVGNSSRARAFPNGTLEIGVTGAGDAGGYTCIATNPAGEATARVELRVLALPHGGNSSAEGGRPGPSDIAASARTAAEGEGTLESEPAVQVTEVTATSGLVSWGPGRPADPVWMFQIQYNSSEDETLIYRIVPASSHHFLLKHLVPGADYDLCLLALSPAAGPSDLTATRLLGCAHFSTLPASPLCHALQAHVLGGTLTVAVGGVLVAALLVFTVALLVRGRGAGNGRLPLKLSHVQSQTNGGPSPTPKAHPPRSPPPRPQRSCSLDLGDAGCYGYARRLGGAWARRSHSVHGGLLGAGCRGVGGSAERLEESVV.

The N-terminal stretch at 1-16 is a signal peptide; it reads MAPPLLLLLLASGAAA. The region spanning 17-48 is the LRRNT domain; sequence CPLPCVCQNLSESLSTLCAHRGLLFVPPNVDR. At 17–518 the chain is on the extracellular side; sequence CPLPCVCQNL…LQAHVLGGTL (502 aa). N-linked (GlcNAc...) asparagine glycans are attached at residues N25 and N70. 7 LRR repeats span residues 49-70, 73-94, 97-118, 121-142, 146-161, 170-191, and 194-215; these read RTVELRLADNFIQALGPPDFRN, GLVDLTLSRNAITRIGARAFGD, SLRSLHLDGNRLVELGTGSLRG, NLQHLILSGNQLGRIAPGAFDD, SLEDLDLSYNNLRQVP, ALHTLNLDHNLIDALPPGAFAQ, and QLSRLDLTSNRLATLAPDPLFS. Positions 234-280 constitute an LRRCT domain; that stretch reads NPLHCNCELLWLRRLARPDDLETCASPPGLAGRYFWAVPEGEFSCEP. The Ig-like domain maps to 281 to 367; that stretch reads PLIARHTQRL…GEATARVELR (87 aa). C302 and C351 form a disulfide bridge. 4 N-linked (GlcNAc...) asparagine glycosylation sites follow: N324, N333, N376, and N440. A disordered region spans residues 373–410; it reads HGGNSSAEGGRPGPSDIAASARTAAEGEGTLESEPAVQ. The Fibronectin type-III domain occupies 405–502; it reads SEPAVQVTEV…GCAHFSTLPA (98 aa). A helical membrane pass occupies residues 519 to 539; sequence TVAVGGVLVAALLVFTVALLV. The Cytoplasmic segment spans residues 540–635; sequence RGRGAGNGRL…SAERLEESVV (96 aa). A disordered region spans residues 555–583; it reads HVQSQTNGGPSPTPKAHPPRSPPPRPQRS. Pro residues predominate over residues 565–580; that stretch reads SPTPKAHPPRSPPPRP. Phosphoserine is present on residues S585 and S626. The short motif at 632–635 is the PDZ-binding element; sequence ESVV.

This sequence belongs to the LRFN family. Can form heteromeric complexes with LRFN1, LRFN2, LRFN3 and LRFN5. Unable to form homophilic interactions across cell junctions. Interacts with DLG1, DLG2, DLG3 and DLG4. In terms of processing, glycosylated.

The protein localises to the membrane. Functionally, promotes neurite outgrowth in hippocampal neurons. May play a role in redistributing DLG4 to the cell periphery. The polypeptide is Leucine-rich repeat and fibronectin type-III domain-containing protein 4 (LRFN4) (Homo sapiens (Human)).